Here is a 307-residue protein sequence, read N- to C-terminus: Mitochondrial brown fat uncoupling protein 1 (307 aa).

Over 1–10 (MVSLTTSEVH) the chain is Mitochondrial intermembrane. The chain crosses the membrane as a helical span at residues 11–32 (PTMGVKTFSAGISACLADIITF). Solcar repeat units lie at residues 11-102 (PTMG…VQEY), 111-201 (PTLG…MKGA), and 210-295 (DDVP…LKKE). Residues 33 to 73 (PLDTAKVRLQIQGEGQTSSTIRYKGVLGTITTLAKTEGWPK) lie on the Mitochondrial matrix side of the membrane. K56 lines the fatty acid 16:0 pocket. The chain crosses the membrane as a helical span at residues 74-96 (LYSGLPAGIQRQISFASLRIGLY). Over 97–116 (DTVQEYFSSGKETPPTLGNR) the chain is Mitochondrial intermembrane. Residues 117–133 (ISAGLMTGGVAVFIGQP) form a helical membrane-spanning segment. The Mitochondrial matrix portion of the chain corresponds to 134–178 (TEVVKVRLQAQSHLHGIKPRYTGTYNAYRIIATTESFSTLWKGTT). Residues 179–195 (PNLMRNVIINRTELVTY) traverse the membrane as a helical segment. The Mitochondrial intermembrane portion of the chain corresponds to 196-212 (DLMKGALVNNQILADDV). The helical transmembrane segment at 213-232 (PCHLLSALVAGFCTTFLASP) threads the bilayer. At 233–266 (ADVVKTRFINSLPGQYPSVPSCAMTMLTKEGPTA) the chain is on the mitochondrial matrix side. C254 is modified (cysteine sulfenic acid (-SOH)). Residues 267–289 (FFKGFVPSFLRLASWNVIMFVCF) form a helical membrane-spanning segment. K269 contacts fatty acid 16:0. At 290 to 307 (EQLKKELMKSRQTMDCTT) the chain is on the mitochondrial intermembrane side.

It belongs to the mitochondrial carrier (TC 2.A.29) family. As to quaternary structure, most probably functions as a monomer. Binds one purine nucleotide per monomer. However, has also been suggested to function as a homodimer or a homotetramer. Tightly associates with cardiolipin in the mitochondrion inner membrane; may stabilize and regulate its activity. May undergo sulfenylation upon cold exposure. May increase the sensitivity of UCP1 thermogenic function to the activation by noradrenaline probably through structural effects. In terms of processing, may undergo ubiquitin-mediated proteasomal degradation.

The protein resides in the mitochondrion inner membrane. It carries out the reaction H(+)(in) = H(+)(out). Its activity is regulated as follows. Has no constitutive proton transporter activity and has to be activated by long-chain fatty acids/LCFAs. Inhibited by purine nucleotides. Both purine nucleotides and LCFAs bind the cytosolic side of the transporter and directly compete to activate or inhibit it. Activated by noradrenaline and reactive oxygen species. Despite lacking canonical translational encoding for selenocysteine, a small pool of the protein has been observed to selectively incorporate selenocysteine at 'Cys-254'. Selenocysteine-modified protein is highly sensitive to redox modification and may constitute a pool of protein highly sensitive to activation by elevated levels of reactive oxygen species (ROS). Mitochondrial protein responsible for thermogenic respiration, a specialized capacity of brown adipose tissue and beige fat that participates in non-shivering adaptive thermogenesis to temperature and diet variations and more generally to the regulation of energy balance. Functions as a long-chain fatty acid/LCFA and proton symporter, simultaneously transporting one LCFA and one proton through the inner mitochondrial membrane. However, LCFAs remaining associated with the transporter via their hydrophobic tails, it results in an apparent transport of protons activated by LCFAs. Thereby, dissipates the mitochondrial proton gradient and converts the energy of substrate oxydation into heat instead of ATP. Regulates the production of reactive oxygen species/ROS by mitochondria. The sequence is that of Mitochondrial brown fat uncoupling protein 1 from Dicrostonyx groenlandicus (Northern collared lemming).